The primary structure comprises 146 residues: MMGGSSSRIAAGLGAALFVGYCIYFDRKRRSDPNYKNKLRERRKKQKAAQEKAGLSRLPDLKDAEAVQKFFLEEIQLGEELLAQGDYEKGVDHLTNAIAVCGQPQQLLQVLQQTLPPPVFQMLLTKLPTISQRIVSAQSISDDDIE.

Residues 1–5 are Mitochondrial intermembrane-facing; that stretch reads MMGGS. A helical transmembrane segment spans residues 6 to 25; it reads SSRIAAGLGAALFVGYCIYF. At 26–146 the chain is on the cytoplasmic side; the sequence is DRKRRSDPNY…AQSISDDDIE (121 aa). Over residues 37 to 47 the composition is skewed to basic residues; sequence NKLRERRKKQK. The tract at residues 37 to 56 is disordered; it reads NKLRERRKKQKAAQEKAGLS. At serine 141 the chain carries Phosphoserine.

This sequence belongs to the Tom20 family. Forms part of the preprotein translocase complex of the outer mitochondrial membrane (TOM complex). Interacts with tom22.

It is found in the mitochondrion outer membrane. Functionally, central component of the receptor complex responsible for the recognition and translocation of cytosolically synthesized mitochondrial preproteins. Together with tom22 functions as the transit peptide receptor at the surface of the mitochondrion outer membrane and facilitates the movement of preproteins into the tom40 translocation pore. The protein is Mitochondrial import receptor subunit TOM20 homolog B (tomm20b) of Danio rerio (Zebrafish).